A 1664-amino-acid chain; its full sequence is MYND-type zinc finger-containing chromatin reader Zmynd8 (1664 aa).

Low complexity-rich tracts occupy residues 1–16 (MEST…SLKS), 30–40 (SPQPQLQSSSL), and 61–84 (SAPP…INVG). Disordered regions lie at residues 1-84 (MEST…INVG), 251-271 (SLSN…LRSE), and 295-323 (LALN…KTPE). Residues 258–271 (NDDKGPRRSNLRSE) are compositionally biased toward basic and acidic residues. Residues 296-308 (ALNTSGEGESSLF) show a composition bias toward polar residues. Low complexity predominate over residues 309–320 (SDASDTKTTTAK). The PHD-type zinc finger occupies 343–389 (DPFCWKCRGCGKLMPCSKCLRSFHSYCVRPATTKFDSSWKCPECQVI). The Zn(2+) site is built by Cys346, Cys349, Cys358, Cys361, His366, Cys369, Cys383, and Cys386. The Bromo domain occupies 401–504 (VSVDLLSQLL…KVCRQEANEI (104 aa)). Residues Cys507, Cys510, and Cys525 each coordinate Zn(2+). In terms of domain architecture, PWWP spans 528-579 (PHLLLWAKLKGFPYWPAKAMGSSNSTLVNVRFFGKHDRAFVPVKDCFLYSAQ). 4 disordered regions span residues 672 to 693 (KTKA…KKLS), 747 to 815 (ESVE…QNEN), 857 to 905 (KIPR…RQQE), and 919 to 1139 (TEVM…TNTS). Residues 676–690 (TESGNESDQSPSPTK) show a composition bias toward polar residues. Basic residues predominate over residues 775–784 (HKRKSKHARK). Over residues 785–800 (QHDNQDNQIEEAEKTG) the composition is skewed to basic and acidic residues. Residues 874–884 (IPLPTAPPPKQ) show a composition bias toward pro residues. The segment covering 935 to 952 (PANQPQTDQVPLQQETIT) has biased composition (polar residues). Residues 953–962 (AQPESQMPAA) show a composition bias toward low complexity. A compositionally biased stretch (pro residues) spans 1006-1019 (PPMPLPMPPPPPLP). Over residues 1037-1053 (TTIQRVSQKQGGKSTDT) the composition is skewed to polar residues. A compositionally biased stretch (low complexity) spans 1073 to 1097 (SPTHSPLLSTAPSPSASPKPTSTLA). Zn(2+) is bound by residues Cys1399, Cys1402, Cys1410, Cys1411, Cys1417, Cys1421, His1429, and Cys1433. The segment at 1399-1433 (CANCMREAQLYCCWNTSYCDYPCQQLHWPGHSATC) adopts an MYND-type zinc-finger fold. Residues 1613-1648 (VPKATGRSGKNNSRMRQTYSNNINNSNPQGMRCNNN) form a disordered region. A compositionally biased stretch (polar residues) spans 1620–1648 (SGKNNSRMRQTYSNNINNSNPQGMRCNNN).

It is found in the nucleus. The protein localises to the chromosome. Functionally, chromatin reader that recognizes specific histone signatures to regulate transcription. Plays a role in neuronal development. This Drosophila melanogaster (Fruit fly) protein is MYND-type zinc finger-containing chromatin reader Zmynd8.